Consider the following 198-residue polypeptide: Carnitine operon protein CaiE (198 aa).

The tract at residues 179–198 (VEENRPRLKGTTDVKPKSAQ) is disordered. The span at 180–198 (EENRPRLKGTTDVKPKSAQ) shows a compositional bias: basic and acidic residues.

Belongs to the transferase hexapeptide repeat family.

It participates in amine and polyamine metabolism; carnitine metabolism. Its function is as follows. Overproduction of CaiE stimulates the activity of CaiB and CaiD. The sequence is that of Carnitine operon protein CaiE from Salmonella enteritidis PT4 (strain P125109).